Consider the following 188-residue polypeptide: Ribosome-recycling factor (188 aa).

This sequence belongs to the RRF family.

It localises to the cytoplasm. In terms of biological role, responsible for the release of ribosomes from messenger RNA at the termination of protein biosynthesis. May increase the efficiency of translation by recycling ribosomes from one round of translation to another. The protein is Ribosome-recycling factor of Anaeromyxobacter dehalogenans (strain 2CP-C).